The following is a 173-amino-acid chain: Large ribosomal subunit protein uL10 (173 aa).

It belongs to the universal ribosomal protein uL10 family. Part of the ribosomal stalk of the 50S ribosomal subunit. The N-terminus interacts with L11 and the large rRNA to form the base of the stalk. The C-terminus forms an elongated spine to which L12 dimers bind in a sequential fashion forming a multimeric L10(L12)X complex.

In terms of biological role, forms part of the ribosomal stalk, playing a central role in the interaction of the ribosome with GTP-bound translation factors. This chain is Large ribosomal subunit protein uL10, found in Cupriavidus pinatubonensis (strain JMP 134 / LMG 1197) (Cupriavidus necator (strain JMP 134)).